Reading from the N-terminus, the 213-residue chain is MSDNNQCVIVGIAGASASGKSLIASTIYNELREKVGDHQIGVITEDCYYSDQSHLSMEERVKTNYDHPNALDHDLLCEHLQQLMSGNAVEVPEYSYTEHTRTSETTTLTPKKVIILEGILLLTDPRLRKLMHASVFMDTPLDICLLRRVKRDVEERGRTMDTVLKQYQETVRPMFMQFIEPSKQHADIIVPRGGKNRIAIDVLKAHIAKLLKS.

14–21 serves as a coordination point for ATP; it reads GASASGKS.

This sequence belongs to the uridine kinase family.

The protein resides in the cytoplasm. It carries out the reaction uridine + ATP = UMP + ADP + H(+). It catalyses the reaction cytidine + ATP = CMP + ADP + H(+). It functions in the pathway pyrimidine metabolism; CTP biosynthesis via salvage pathway; CTP from cytidine: step 1/3. The protein operates within pyrimidine metabolism; UMP biosynthesis via salvage pathway; UMP from uridine: step 1/1. The chain is Uridine kinase from Vibrio atlanticus (strain LGP32) (Vibrio splendidus (strain Mel32)).